The chain runs to 1449 residues: DNA polymerase III PolC-type (1449 aa).

Residues 194–231 (AQEKPVKKESSDNKHKSNGGNKGGYEKKSYKDEPKNEN) form a disordered region. Basic and acidic residues-rich tracts occupy residues 197–208 (KPVKKESSDNKH) and 217–229 (GYEK…EPKN). The Exonuclease domain maps to 435–590 (YVVFDIETTG…DDAKATAEIL (156 aa)).

The protein belongs to the DNA polymerase type-C family. PolC subfamily.

It localises to the cytoplasm. It catalyses the reaction DNA(n) + a 2'-deoxyribonucleoside 5'-triphosphate = DNA(n+1) + diphosphate. Functionally, required for replicative DNA synthesis. This DNA polymerase also exhibits 3' to 5' exonuclease activity. The polypeptide is DNA polymerase III PolC-type (Clostridium perfringens (strain 13 / Type A)).